A 554-amino-acid chain; its full sequence is Dihydroxy-acid dehydratase (554 aa).

Cys51 contacts [2Fe-2S] cluster. Residue Asp83 coordinates Mg(2+). Position 124 (Cys124) interacts with [2Fe-2S] cluster. Residues Asp125 and Lys126 each coordinate Mg(2+). Lys126 carries the N6-carboxylysine modification. Cys193 is a [2Fe-2S] cluster binding site. Residue Glu444 coordinates Mg(2+). Catalysis depends on Ser470, which acts as the Proton acceptor.

The protein belongs to the IlvD/Edd family. In terms of assembly, homodimer. The cofactor is [2Fe-2S] cluster. Requires Mg(2+) as cofactor.

The enzyme catalyses (2R)-2,3-dihydroxy-3-methylbutanoate = 3-methyl-2-oxobutanoate + H2O. It carries out the reaction (2R,3R)-2,3-dihydroxy-3-methylpentanoate = (S)-3-methyl-2-oxopentanoate + H2O. It participates in amino-acid biosynthesis; L-isoleucine biosynthesis; L-isoleucine from 2-oxobutanoate: step 3/4. Its pathway is amino-acid biosynthesis; L-valine biosynthesis; L-valine from pyruvate: step 3/4. Its function is as follows. Functions in the biosynthesis of branched-chain amino acids. Catalyzes the dehydration of (2R,3R)-2,3-dihydroxy-3-methylpentanoate (2,3-dihydroxy-3-methylvalerate) into 2-oxo-3-methylpentanoate (2-oxo-3-methylvalerate) and of (2R)-2,3-dihydroxy-3-methylbutanoate (2,3-dihydroxyisovalerate) into 2-oxo-3-methylbutanoate (2-oxoisovalerate), the penultimate precursor to L-isoleucine and L-valine, respectively. The protein is Dihydroxy-acid dehydratase of Vesicomyosocius okutanii subsp. Calyptogena okutanii (strain HA).